Reading from the N-terminus, the 103-residue chain is Large ribosomal subunit protein bL21 (103 aa).

Belongs to the bacterial ribosomal protein bL21 family. Part of the 50S ribosomal subunit. Contacts protein L20.

This protein binds to 23S rRNA in the presence of protein L20. This chain is Large ribosomal subunit protein bL21, found in Shewanella pealeana (strain ATCC 700345 / ANG-SQ1).